The sequence spans 368 residues: N-acetylneuraminate epimerase (368 aa).

A signal peptide spans 1-19; sequence MNKTITALAIIMASFAANA. 7 Kelch repeats span residues 40–84, 86–137, 139–173, 174–219, 222–265, 287–336, and 338–367; these read TVYI…AFID, NLYV…FVHN, KAYV…KINA, YYFD…VNKG, TWLI…VAGG, ENYQ…PWNN, and LLII…VTVQ. The active-site Proton acceptor is the glutamate 228.

The protein belongs to the NanM family. In terms of assembly, homodimer.

The protein resides in the periplasm. The catalysed reaction is N-acetyl-alpha-neuraminate = N-acetyl-beta-neuraminate. Functionally, converts alpha-N-acetylneuranimic acid (Neu5Ac) to the beta-anomer, accelerating the equilibrium between the alpha- and beta-anomers. Probably facilitates sialidase-negative bacteria to compete successfully for limited amounts of extracellular Neu5Ac, which is likely taken up in the beta-anomer. In addition, the rapid removal of sialic acid from solution might be advantageous to the bacterium to damp down host responses. The polypeptide is N-acetylneuraminate epimerase (Escherichia coli O139:H28 (strain E24377A / ETEC)).